Here is a 148-residue protein sequence, read N- to C-terminus: Snaclec 4 (148 aa).

A signal peptide spans 1–23 (MGRFIFVSFSLLVVFFSLSGTEA). The region spanning 34-148 (YDQNCYKAFE…DTQFRLQEPG (115 aa)) is the C-type lectin domain.

The protein belongs to the snaclec family. As to quaternary structure, heterodimer; disulfide-linked. Contains disulfide bonds. Expressed by the venom gland.

It is found in the secreted. Interferes with one step of hemostasis (modulation of platelet aggregation, or coagulation cascade, for example). This Echis pyramidum leakeyi (Leakey's carpet viper) protein is Snaclec 4.